Consider the following 164-residue polypeptide: Ribosome maturation factor RimM (164 aa).

A PRC barrel domain is found at 93 to 164 (DSEYYVANLN…FVVIVPPEFI (72 aa)).

The protein belongs to the RimM family. As to quaternary structure, binds ribosomal protein uS19.

The protein resides in the cytoplasm. In terms of biological role, an accessory protein needed during the final step in the assembly of 30S ribosomal subunit, possibly for assembly of the head region. Essential for efficient processing of 16S rRNA. May be needed both before and after RbfA during the maturation of 16S rRNA. It has affinity for free ribosomal 30S subunits but not for 70S ribosomes. This is Ribosome maturation factor RimM from Orientia tsutsugamushi (strain Boryong) (Rickettsia tsutsugamushi).